Reading from the N-terminus, the 107-residue chain is Iron-binding protein IscA (107 aa).

Positions 35, 99, and 101 each coordinate Fe cation.

It belongs to the HesB/IscA family. In terms of assembly, homodimer; may form tetramers and higher multimers. Requires Fe cation as cofactor.

Is able to transfer iron-sulfur clusters to apo-ferredoxin. Multiple cycles of [2Fe2S] cluster formation and transfer are observed, suggesting that IscA acts catalytically. Recruits intracellular free iron so as to provide iron for the assembly of transient iron-sulfur cluster in IscU in the presence of IscS, L-cysteine and the thioredoxin reductase system TrxA/TrxB. This chain is Iron-binding protein IscA, found in Salmonella newport (strain SL254).